The sequence spans 1121 residues: Cuscuta receptor 1 (1121 aa).

The N-terminal stretch at 1-20 is a signal peptide; sequence MGNIKFLLLVFFLIVVVVNG. Over 21–1058 the chain is Extracellular; sequence CWEEERNALL…EESSELEDIQ (1038 aa). N91 carries an N-linked (GlcNAc...) asparagine glycan. LRR repeat units lie at residues 98–122, 126–152, 185–209, 210–233, 234–259, 260–282, 284–308, and 309–331; these read FKSL…GFSK, LPNL…CWIS, LSNL…ALGE, LRNL…SLKI, FPSL…IIDL, SNLE…KGNK, MTSL…SLKS, and FSSL…IYAL. N224 carries N-linked (GlcNAc...) asparagine glycosylation. 3 N-linked (GlcNAc...) asparagine glycosylation sites follow: N298, N321, and N333. One copy of the LRR 9 repeat lies at 334–360; it reads LSTVEYLYFKGSSLNDNFLPNIGQMTS. Residues N372 and N406 are each glycosylated (N-linked (GlcNAc...) asparagine). 21 LRR repeats span residues 383-406, 407-432, 433-457, 459-479, 507-531, 556-580, 581-605, 607-628, 630-654, 655-678, 680-701, 702-725, 726-749, 751-772, 773-796, 797-820, 822-846, 914-938, 939-961, 962-986, and 988-1012; these read LKYI…CLGN, LTSL…IWRR, LTSL…QFSD, KKLI…EYQN, QYDL…LLEN, HLHL…MSLA, FPKL…ISGI, LTIL…LAVV, SPQL…EFRP, HVLS…VFLS, LITL…TRDN, RRLL…ICNL, KIIN…VSSL, LKHI…IFNF, SSLI…IGSL, SNLN…ICML, NLSI…YLTQ, LKYM…LGNM, SNIH…TFSN, LQEI…LLEL, and SLAV…QFGT. 3 N-linked (GlcNAc...) asparagine glycosylation sites follow: N531, N576, and N588. N689 carries N-linked (GlcNAc...) asparagine glycosylation. An N-linked (GlcNAc...) asparagine glycan is attached at N771. N-linked (GlcNAc...) asparagine glycans are attached at residues N822, N937, N945, N976, N998, N1014, and N1041. Residues 1059-1079 traverse the membrane as a helical segment; the sequence is CFYIGFVVSFGAILLGLAAAL. The Cytoplasmic segment spans residues 1080-1121; sequence CLNRHWRRAWFRMIEALMFYCYYFVLDNIVTPIKSRWYKNVG.

The protein belongs to the RLP family. In terms of assembly, interacts with an 11 kDa glycine-rich protein (GRP) of C.reflexa. Interacts with SOBIR1 and SOBIR1-like kinases; presence or absence of GRP has no effect on interaction.

It localises to the cell membrane. The protein resides in the cell surface. In terms of biological role, involved in plant defense. Contributes to resistance against parasitic plant C.reflexa. Acts as a receptor for the 11 kDa glycine-rich protein (GRP) of C.reflexa inducing immune responses such as emission of stress-related phytohormone ethylene, reactive oxygen species (ROS) release, and hypersensitive cell death. Recognizes a specific pathogen-associated molecular pattern (PAMP), a cysteine-rich peptide 21 (crip21), from GRP located on the cell wall of C.reflexa. This is Cuscuta receptor 1 from Solanum lycopersicum (Tomato).